The chain runs to 238 residues: Ubiquinone biosynthesis O-methyltransferase (238 aa).

Residues Arg40, Gly59, Asp80, and Met124 each coordinate S-adenosyl-L-methionine.

The protein belongs to the methyltransferase superfamily. UbiG/COQ3 family.

It carries out the reaction a 3-demethylubiquinol + S-adenosyl-L-methionine = a ubiquinol + S-adenosyl-L-homocysteine + H(+). The catalysed reaction is a 3-(all-trans-polyprenyl)benzene-1,2-diol + S-adenosyl-L-methionine = a 2-methoxy-6-(all-trans-polyprenyl)phenol + S-adenosyl-L-homocysteine + H(+). The protein operates within cofactor biosynthesis; ubiquinone biosynthesis. In terms of biological role, O-methyltransferase that catalyzes the 2 O-methylation steps in the ubiquinone biosynthetic pathway. The sequence is that of Ubiquinone biosynthesis O-methyltransferase from Ralstonia nicotianae (strain ATCC BAA-1114 / GMI1000) (Ralstonia solanacearum).